We begin with the raw amino-acid sequence, 289 residues long: 2-hydroxy-6-oxononadienedioate/2-hydroxy-6-oxononatrienedioate hydrolase 1 (289 aa).

The 237-residue stretch at 39-275 (TVVMLHGSGP…RCGHWAQWEH (237 aa)) folds into the AB hydrolase-1 domain. His269 functions as the Proton acceptor in the catalytic mechanism.

The protein belongs to the AB hydrolase superfamily. MhpC family. As to quaternary structure, homodimer.

The enzyme catalyses (2Z,4E)-2-hydroxy-6-oxonona-2,4-dienedioate + H2O = (2Z)-2-hydroxypenta-2,4-dienoate + succinate + H(+). The catalysed reaction is (2Z,4E,7E)-2-hydroxy-6-oxonona-2,4,7-trienedioate + H2O = (2Z)-2-hydroxypenta-2,4-dienoate + fumarate + H(+). It functions in the pathway aromatic compound metabolism; 3-phenylpropanoate degradation. Its function is as follows. Catalyzes the cleavage of the C5-C6 bond of 2-hydroxy-6-oxononadienedioate and 2-hydroxy-6-oxononatrienedioate, a dienol ring fission product of the bacterial meta-cleavage pathway for degradation of phenylpropionic acid. The polypeptide is 2-hydroxy-6-oxononadienedioate/2-hydroxy-6-oxononatrienedioate hydrolase 1 (Dechloromonas aromatica (strain RCB)).